The following is a 42-amino-acid chain: Conotoxin Au11.6 (42 aa).

Cystine bridges form between Cys6-Cys20, Cys13-Cys25, Cys19-Cys30, and Cys24-Cys37.

The protein belongs to the conotoxin I1 superfamily. Expressed by the venom duct.

It localises to the secreted. This is Conotoxin Au11.6 from Conus aulicus (Princely cone).